Consider the following 708-residue polypeptide: Fatty acid oxidation complex subunit alpha (708 aa).

Positions 1–190 are enoyl-CoA hydratase; sequence MDMEKTFNLT…KMGLVDDAVP (190 aa). Residues 310-708 are 3-hydroxyacyl-CoA dehydrogenase; the sequence is QKVNKVMVLG…MAEEGTRFFS (399 aa).

The protein in the N-terminal section; belongs to the enoyl-CoA hydratase/isomerase family. In the central section; belongs to the 3-hydroxyacyl-CoA dehydrogenase family. As to quaternary structure, heterotetramer of two alpha chains (FadJ) and two beta chains (FadI).

Its subcellular location is the cytoplasm. The catalysed reaction is a (3S)-3-hydroxyacyl-CoA = a (2E)-enoyl-CoA + H2O. It carries out the reaction a 4-saturated-(3S)-3-hydroxyacyl-CoA = a (3E)-enoyl-CoA + H2O. It catalyses the reaction a (3S)-3-hydroxyacyl-CoA + NAD(+) = a 3-oxoacyl-CoA + NADH + H(+). The enzyme catalyses (3S)-3-hydroxybutanoyl-CoA = (3R)-3-hydroxybutanoyl-CoA. Its pathway is lipid metabolism; fatty acid beta-oxidation. Catalyzes the formation of a hydroxyacyl-CoA by addition of water on enoyl-CoA. Also exhibits 3-hydroxyacyl-CoA epimerase and 3-hydroxyacyl-CoA dehydrogenase activities. The polypeptide is Fatty acid oxidation complex subunit alpha (Shewanella halifaxensis (strain HAW-EB4)).